A 196-amino-acid chain; its full sequence is Agamous-like MADS-box protein AGL31 (196 aa).

In terms of domain architecture, MADS-box spans 1–61; sequence MGRKKVEIKR…GKLYKSASGD (61 aa). The 91-residue stretch at 80–170 folds into the K-box domain; sequence ALDLAEKTRN…ASQVGKKTFL (91 aa).

Expressed in most plant tissues, roots, seedlings, leaves, stems, inflorescences, pollen, siliques and flowers.

The protein resides in the nucleus. Its function is as follows. Probable transcription factor that prevents vernalization by short periods of cold. Acts as a floral repressor. In Arabidopsis thaliana (Mouse-ear cress), this protein is Agamous-like MADS-box protein AGL31 (AGL31).